A 37-amino-acid chain; its full sequence is Delta/kappa-conotoxin Mo3964 (37 aa).

Disulfide bonds link cysteine 4–cysteine 12, cysteine 11–cysteine 27, and cysteine 21–cysteine 34.

As to expression, expressed by the venom duct.

The protein localises to the secreted. This toxin reduces the outward currents that are due to the opening of voltage-gated potassium channels in DRG neurons. In addition, leftward shift in the presence of this toxin is observed in averaged normalized conductance-voltage plot of outward sodium currents (Nav1.2/SCN2A). This Conus monile (Necklace cone) protein is Delta/kappa-conotoxin Mo3964.